Consider the following 296-residue polypeptide: MTDIHIQDGDLSSLKDKVVVITGGSSGIGLATTNLLLDLGAKVVIGDLQPPTTRVDSERCSFHKVDVTVWSDQLTLFKEARELHGRIDHVFANAGVGPKADYLSTALDQNGDLVEPTFLTLDVNLKAVIYTATIACYYMREEQQSPAGGSIVIVSSVAGVSRFRAVDYATAKHGNLGFARGLHQRLTAENSPTRVNLIAPSWTNTGFMPPQIMAAVGVEPQEPASVGRAAAYLMADDSRKGQMIHIAKGRYREVEESIMLPAAEKVVDVENGGVMEDDTLAKIIETMGIFKAKATQ.

Residues I28, D66, and N93 each contribute to the NADP(+) site. S155 functions as the Proton donor in the catalytic mechanism. Positions 168, 172, and 205 each coordinate NADP(+). The active-site Proton acceptor is the Y168. Residue K172 is the Lowers pKa of active site Tyr of the active site.

It belongs to the short-chain dehydrogenases/reductases (SDR) family.

It carries out the reaction ascofuranol + A = ascofuranone + AH2. The protein operates within secondary metabolite biosynthesis; terpenoid biosynthesis. In terms of biological role, short-chain dehydrogenase/reductase; part of the asc-2 gene cluster that mediates the biosynthesis of ascofuranone, a strong inhibitor of cyanide-insensitive alternative oxidases and a promising drug candidate against African trypanosomiasis. The first step in the pathway is performed by the non-reducing polyketide synthase ascC that produces orsellinic acid by condensing acetyl-CoA with 3 malonyl-CoA units. Orsellinic acid is then prenylated by the prenyltransferase ascA to yield ilicicolinic acid B. Ilicicolinic acid B is further reduced to ilicicolin B by the reductase ascB. The halogenase ascD then chlorinates ilicicolin B to produce ilicicolin A which is converted to ilicicolin A epoxide by the cytochrome P450 monooxygenase ascE that catalyzes stereoselective epoxidation of the terminal double bond of the prenyl group. Ilicicolin A epoxide is the last common precursor for the biosynthesis of ascofuranone and ascochlorin. The terpene cyclase ascF produces a monocyclic terpene, and the cyclization reaction is proposed to be initiated by protonation of the terminal epoxide of ilicicolin A epoxide to generate a monocyclic tertiarycation, which is followed by a series of hydride and methyl shifts with abstraction of proton, leading to the formation of the (14S,15R,19R)-trimethylcyclohexanone ring structure of ilicicolin C, which is finally reduced to ascochlorin by the dehydrogenase ascG. On the other hand, ilicicolin A epoxide is hydroxylated by the cytochrome P450 monooxygenase ascH, and the resultant product is cyclized by the terpene cyclase ascI to ascofuranol via protonation-initiated epoxide ring opening, which facilitates the 6-endo-tet cyclization to form the tetrahy-drofuran ring. Finally, ascofuranol is oxidized into ascofuranone by ascJ. The protein is Short-chain dehydrogenase/reductase ascJ of Acremonium egyptiacum (Oospora egyptiaca).